The primary structure comprises 419 residues: Serine hydroxymethyltransferase (419 aa).

(6S)-5,6,7,8-tetrahydrofolate-binding positions include L121 and 125–127; that span reads GHL. N6-(pyridoxal phosphate)lysine is present on K229. 354-356 is a (6S)-5,6,7,8-tetrahydrofolate binding site; sequence SPF.

It belongs to the SHMT family. In terms of assembly, homodimer. Requires pyridoxal 5'-phosphate as cofactor.

The protein resides in the cytoplasm. It carries out the reaction (6R)-5,10-methylene-5,6,7,8-tetrahydrofolate + glycine + H2O = (6S)-5,6,7,8-tetrahydrofolate + L-serine. It participates in one-carbon metabolism; tetrahydrofolate interconversion. The protein operates within amino-acid biosynthesis; glycine biosynthesis; glycine from L-serine: step 1/1. In terms of biological role, catalyzes the reversible interconversion of serine and glycine with tetrahydrofolate (THF) serving as the one-carbon carrier. This reaction serves as the major source of one-carbon groups required for the biosynthesis of purines, thymidylate, methionine, and other important biomolecules. Also exhibits THF-independent aldolase activity toward beta-hydroxyamino acids, producing glycine and aldehydes, via a retro-aldol mechanism. The polypeptide is Serine hydroxymethyltransferase (Coxiella burnetii (strain RSA 331 / Henzerling II)).